Reading from the N-terminus, the 293-residue chain is Indole-3-glycerol phosphate synthase (293 aa).

This sequence belongs to the TrpC family.

The enzyme catalyses 1-(2-carboxyphenylamino)-1-deoxy-D-ribulose 5-phosphate + H(+) = (1S,2R)-1-C-(indol-3-yl)glycerol 3-phosphate + CO2 + H2O. The protein operates within amino-acid biosynthesis; L-tryptophan biosynthesis; L-tryptophan from chorismate: step 4/5. This chain is Indole-3-glycerol phosphate synthase, found in Rippkaea orientalis (strain PCC 8801 / RF-1) (Cyanothece sp. (strain PCC 8801)).